A 545-amino-acid polypeptide reads, in one-letter code: CTP synthase (545 aa).

An amidoligase domain region spans residues 1–265 (MSKYIFVTGG…LVPIAKQLDL (265 aa)). Serine 13 provides a ligand contact to CTP. UTP is bound at residue serine 13. Residues 14–19 (SLGKGI) and aspartate 71 contribute to the ATP site. Aspartate 71 and glutamate 139 together coordinate Mg(2+). Residues 146–148 (DIE), 186–191 (KTKPTQ), and lysine 222 contribute to the CTP site. Residues 186–191 (KTKPTQ) and lysine 222 contribute to the UTP site. The Glutamine amidotransferase type-1 domain maps to 290-544 (KIAFVGKYLQ…VENAYKCQRS (255 aa)). Glycine 355 serves as a coordination point for L-glutamine. Cysteine 382 (nucleophile; for glutamine hydrolysis) is an active-site residue. L-glutamine contacts are provided by residues 383–386 (LGMQ), glutamate 406, and arginine 473. Catalysis depends on residues histidine 517 and glutamate 519.

The protein belongs to the CTP synthase family. As to quaternary structure, homotetramer.

The catalysed reaction is UTP + L-glutamine + ATP + H2O = CTP + L-glutamate + ADP + phosphate + 2 H(+). The enzyme catalyses L-glutamine + H2O = L-glutamate + NH4(+). It catalyses the reaction UTP + NH4(+) + ATP = CTP + ADP + phosphate + 2 H(+). It functions in the pathway pyrimidine metabolism; CTP biosynthesis via de novo pathway; CTP from UDP: step 2/2. With respect to regulation, allosterically activated by GTP, when glutamine is the substrate; GTP has no effect on the reaction when ammonia is the substrate. The allosteric effector GTP functions by stabilizing the protein conformation that binds the tetrahedral intermediate(s) formed during glutamine hydrolysis. Inhibited by the product CTP, via allosteric rather than competitive inhibition. Functionally, catalyzes the ATP-dependent amination of UTP to CTP with either L-glutamine or ammonia as the source of nitrogen. Regulates intracellular CTP levels through interactions with the four ribonucleotide triphosphates. The chain is CTP synthase from Nautilia profundicola (strain ATCC BAA-1463 / DSM 18972 / AmH).